The primary structure comprises 70 residues: DNA gyrase inhibitor YacG (70 aa).

Residues Cys-20, Cys-23, Cys-35, and Cys-39 each coordinate Zn(2+).

Belongs to the DNA gyrase inhibitor YacG family. Interacts with GyrB. The cofactor is Zn(2+).

In terms of biological role, inhibits all the catalytic activities of DNA gyrase by preventing its interaction with DNA. Acts by binding directly to the C-terminal domain of GyrB, which probably disrupts DNA binding by the gyrase. This Rhizobium etli (strain CIAT 652) protein is DNA gyrase inhibitor YacG.